A 161-amino-acid polypeptide reads, in one-letter code: Urease accessory protein UreE (161 aa).

Belongs to the UreE family. Homodimer.

Its subcellular location is the cytoplasm. In terms of biological role, involved in urease metallocenter assembly. Binds nickel. Probably functions as a nickel donor during metallocenter assembly. It is not essential for urease activity. This chain is Urease accessory protein UreE, found in Proteus mirabilis (strain HI4320).